Here is a 590-residue protein sequence, read N- to C-terminus: Urease subunit alpha (590 aa).

One can recognise a Urease domain in the interval 134 to 590 (GGIDSHIHFI…LPLAQRYFLF (457 aa)). Residues His-139, His-141, and Lys-222 each coordinate Ni(2+). At Lys-222 the chain carries N6-carboxylysine. Residue His-224 coordinates substrate. Ni(2+) contacts are provided by His-251 and His-277. Catalysis depends on His-325, which acts as the Proton donor. Asp-365 provides a ligand contact to Ni(2+). Residues 388–416 (QQRGWLSPPAAGQGAGLSSAAGQGVDHDT) are disordered. Residues 393–411 (LSPPAAGQGAGLSSAAGQG) are compositionally biased toward low complexity.

This sequence belongs to the metallo-dependent hydrolases superfamily. Urease alpha subunit family. In terms of assembly, heterotrimer of UreA (gamma), UreB (beta) and UreC (alpha) subunits. Three heterotrimers associate to form the active enzyme. It depends on Ni cation as a cofactor. Post-translationally, carboxylation allows a single lysine to coordinate two nickel ions.

Its subcellular location is the cytoplasm. It catalyses the reaction urea + 2 H2O + H(+) = hydrogencarbonate + 2 NH4(+). The protein operates within nitrogen metabolism; urea degradation; CO(2) and NH(3) from urea (urease route): step 1/1. This chain is Urease subunit alpha, found in Verminephrobacter eiseniae (strain EF01-2).